Reading from the N-terminus, the 216-residue chain is Probable transaldolase (216 aa).

The Schiff-base intermediate with substrate role is filled by K83.

The protein belongs to the transaldolase family. Type 3B subfamily.

The protein resides in the cytoplasm. The catalysed reaction is D-sedoheptulose 7-phosphate + D-glyceraldehyde 3-phosphate = D-erythrose 4-phosphate + beta-D-fructose 6-phosphate. Its pathway is carbohydrate degradation; pentose phosphate pathway; D-glyceraldehyde 3-phosphate and beta-D-fructose 6-phosphate from D-ribose 5-phosphate and D-xylulose 5-phosphate (non-oxidative stage): step 2/3. Transaldolase is important for the balance of metabolites in the pentose-phosphate pathway. This chain is Probable transaldolase, found in Shouchella clausii (strain KSM-K16) (Alkalihalobacillus clausii).